Reading from the N-terminus, the 159-residue chain is Putative 4-hydroxy-4-methyl-2-oxoglutarate aldolase (159 aa).

Residues 74 to 77 and arginine 96 contribute to the substrate site; that span reads GDNL. Residue aspartate 97 participates in a divalent metal cation binding.

This sequence belongs to the class II aldolase/RraA-like family. In terms of assembly, homotrimer. A divalent metal cation serves as cofactor.

It catalyses the reaction 4-hydroxy-4-methyl-2-oxoglutarate = 2 pyruvate. The enzyme catalyses oxaloacetate + H(+) = pyruvate + CO2. Catalyzes the aldol cleavage of 4-hydroxy-4-methyl-2-oxoglutarate (HMG) into 2 molecules of pyruvate. Also contains a secondary oxaloacetate (OAA) decarboxylase activity due to the common pyruvate enolate transition state formed following C-C bond cleavage in the retro-aldol and decarboxylation reactions. The chain is Putative 4-hydroxy-4-methyl-2-oxoglutarate aldolase from Bacillus anthracis.